The primary structure comprises 95 residues: Aspartyl/glutamyl-tRNA(Asn/Gln) amidotransferase subunit C (95 aa).

Belongs to the GatC family. As to quaternary structure, heterotrimer of A, B and C subunits.

The catalysed reaction is L-glutamyl-tRNA(Gln) + L-glutamine + ATP + H2O = L-glutaminyl-tRNA(Gln) + L-glutamate + ADP + phosphate + H(+). It carries out the reaction L-aspartyl-tRNA(Asn) + L-glutamine + ATP + H2O = L-asparaginyl-tRNA(Asn) + L-glutamate + ADP + phosphate + 2 H(+). Functionally, allows the formation of correctly charged Asn-tRNA(Asn) or Gln-tRNA(Gln) through the transamidation of misacylated Asp-tRNA(Asn) or Glu-tRNA(Gln) in organisms which lack either or both of asparaginyl-tRNA or glutaminyl-tRNA synthetases. The reaction takes place in the presence of glutamine and ATP through an activated phospho-Asp-tRNA(Asn) or phospho-Glu-tRNA(Gln). This chain is Aspartyl/glutamyl-tRNA(Asn/Gln) amidotransferase subunit C, found in Thermoanaerobacter pseudethanolicus (strain ATCC 33223 / 39E) (Clostridium thermohydrosulfuricum).